Here is a 297-residue protein sequence, read N- to C-terminus: Tumor necrosis factor receptor superfamily member 27 (297 aa).

Topologically, residues 1 to 138 are extracellular; it reads MDCQENEYWD…TPTVPPQEAT (138 aa). 3 TNFR-Cys repeats span residues 2-41, 43-83, and 85-118; these read DCQE…DAYC, ACPP…NAVC, and DCLP…EVQC. 8 disulfide bridges follow: C3/C15, C18/C31, C21/C41, C44/C58, C61/C75, C64/C83, C86/C104, and C107/C118. N-linked (GlcNAc...) asparagine glycosylation is present at N74. A helical; Signal-anchor for type III membrane protein transmembrane segment spans residues 139-159; that stretch reads LVALVSSLLVVFTLAFLGLFF. Topologically, residues 160–297 are cytoplasmic; sequence LYCKQFFNRH…LNVPFEVPSP (138 aa). The span at 272-281 shows a compositional bias: polar residues; the sequence is ETLGGNTVES. A disordered region spans residues 272-297; it reads ETLGGNTVESTGDRLELNVPFEVPSP.

Associates with TRAF1, TRAF3 and TRAF6.

It localises to the membrane. Receptor for EDA isoform A2, but not for EDA isoform A1. Mediates the activation of the NF-kappa-B and JNK pathways. Activation seems to be mediated by binding to TRAF3 and TRAF6. This Homo sapiens (Human) protein is Tumor necrosis factor receptor superfamily member 27 (EDA2R).